A 463-amino-acid polypeptide reads, in one-letter code: Kynureninase 2 (463 aa).

Pyridoxal 5'-phosphate-binding positions include Leu134, Thr135, 162–165 (FPSD), Asp247, His250, and Tyr272. Residue Lys273 is modified to N6-(pyridoxal phosphate)lysine. The pyridoxal 5'-phosphate site is built by Trp312 and Asn340.

It belongs to the kynureninase family. In terms of assembly, homodimer. Requires pyridoxal 5'-phosphate as cofactor.

It localises to the cytoplasm. It catalyses the reaction L-kynurenine + H2O = anthranilate + L-alanine + H(+). The catalysed reaction is 3-hydroxy-L-kynurenine + H2O = 3-hydroxyanthranilate + L-alanine + H(+). Its pathway is amino-acid degradation; L-kynurenine degradation; L-alanine and anthranilate from L-kynurenine: step 1/1. It participates in cofactor biosynthesis; NAD(+) biosynthesis; quinolinate from L-kynurenine: step 2/3. In terms of biological role, catalyzes the cleavage of L-kynurenine (L-Kyn) and L-3-hydroxykynurenine (L-3OHKyn) into anthranilic acid (AA) and 3-hydroxyanthranilic acid (3-OHAA), respectively. The chain is Kynureninase 2 (bna5-2) from Aspergillus terreus (strain NIH 2624 / FGSC A1156).